The sequence spans 252 residues: Adenylate kinase (252 aa).

Residue Gly-47–Thr-52 coordinates ATP. Residues Ala-67 to Val-96 are NMP. AMP contacts are provided by residues Thr-68, Arg-73, Gly-94–Val-96, Gly-123–Arg-126, and Gln-130. An LID region spans residues Gly-164–Asp-201. ATP contacts are provided by residues Arg-165 and Ser-174–Tyr-175. Residues Arg-198 and Arg-209 each contribute to the AMP site. Gln-237 contacts ATP.

Belongs to the adenylate kinase family. AK2 subfamily. In terms of assembly, monomer.

It is found in the cytoplasm. Its subcellular location is the cytosol. It localises to the mitochondrion intermembrane space. It catalyses the reaction AMP + ATP = 2 ADP. Its function is as follows. Catalyzes the reversible transfer of the terminal phosphate group between ATP and AMP. Plays an important role in cellular energy homeostasis and in adenine nucleotide metabolism. Adenylate kinase activity is critical for regulation of the phosphate utilization and the AMP de novo biosynthesis pathways. The polypeptide is Adenylate kinase (Lodderomyces elongisporus (strain ATCC 11503 / CBS 2605 / JCM 1781 / NBRC 1676 / NRRL YB-4239) (Yeast)).